A 312-amino-acid polypeptide reads, in one-letter code: Glyoxylate/hydroxypyruvate reductase A (312 aa).

Arg227 is a catalytic residue. The active-site Proton donor is the His275.

The protein belongs to the D-isomer specific 2-hydroxyacid dehydrogenase family. GhrA subfamily.

Its subcellular location is the cytoplasm. It carries out the reaction glycolate + NADP(+) = glyoxylate + NADPH + H(+). It catalyses the reaction (R)-glycerate + NAD(+) = 3-hydroxypyruvate + NADH + H(+). The catalysed reaction is (R)-glycerate + NADP(+) = 3-hydroxypyruvate + NADPH + H(+). Catalyzes the NADPH-dependent reduction of glyoxylate and hydroxypyruvate into glycolate and glycerate, respectively. The polypeptide is Glyoxylate/hydroxypyruvate reductase A (Shigella dysenteriae serotype 1 (strain Sd197)).